A 525-amino-acid chain; its full sequence is Glutamate synthase large subunit-like protein YerD (525 aa).

A helical membrane pass occupies residues 4-24 (IIIALIAFIIGIIAIPIVLFA).

The protein belongs to the glutamate synthase family.

It is found in the cell membrane. The polypeptide is Glutamate synthase large subunit-like protein YerD (yerD) (Bacillus subtilis (strain 168)).